Consider the following 435-residue polypeptide: Putative GMP synthase [glutamine-hydrolyzing] 2 (435 aa).

One can recognise a Glutamine amidotransferase type-1; truncated domain in the interval 1 to 120 (MKQDMIVILD…VFDTCQAEAN (120 aa)). The GMPS ATP-PPase domain occupies 121–310 (WNMANFVNDQ…LGLPYEMVYR (190 aa)). 148–154 (SGGVDSS) is an ATP binding site.

In terms of assembly, homodimer.

The enzyme catalyses XMP + L-glutamine + ATP + H2O = GMP + L-glutamate + AMP + diphosphate + 2 H(+). It functions in the pathway purine metabolism; GMP biosynthesis; GMP from XMP (L-Gln route): step 1/1. In terms of biological role, catalyzes the synthesis of GMP from XMP. This Bacteroides thetaiotaomicron (strain ATCC 29148 / DSM 2079 / JCM 5827 / CCUG 10774 / NCTC 10582 / VPI-5482 / E50) protein is Putative GMP synthase [glutamine-hydrolyzing] 2 (guaA2).